Reading from the N-terminus, the 203-residue chain is Small ribosomal subunit protein uS4 (203 aa).

Positions 92–164 (TRLDSVVYLL…LEENRIRNVP (73 aa)) constitute an S4 RNA-binding domain.

The protein belongs to the universal ribosomal protein uS4 family. In terms of assembly, part of the 30S ribosomal subunit. Contacts protein S5. The interaction surface between S4 and S5 is involved in control of translational fidelity.

Functionally, one of the primary rRNA binding proteins, it binds directly to 16S rRNA where it nucleates assembly of the body of the 30S subunit. With S5 and S12 plays an important role in translational accuracy. The sequence is that of Small ribosomal subunit protein uS4 from Opitutus terrae (strain DSM 11246 / JCM 15787 / PB90-1).